The following is a 335-amino-acid chain: 2-acylglycerol O-acyltransferase 1 (335 aa).

Transmembrane regions (helical) follow at residues Thr18–Ile38 and Val40–Phe60. Asn121 and Asn125 each carry an N-linked (GlcNAc...) asparagine glycan. Residues Leu132–Phe152 form a helical membrane-spanning segment. The N-linked (GlcNAc...) asparagine glycan is linked to Asn180.

Belongs to the diacylglycerol acyltransferase family. As to expression, expressed in stomach and liver.

The protein localises to the endoplasmic reticulum membrane. The enzyme catalyses a 2-acylglycerol + an acyl-CoA = a 1,2-diacylglycerol + CoA. It carries out the reaction 2-(9Z-octadecenoyl)-glycerol + butanoyl-CoA = 1-butanoyl-2-(9Z-octadecenoyl)-glycerol + CoA. It catalyses the reaction 2-(9Z-octadecenoyl)-glycerol + octanoyl-CoA = 1-octanoyl-2-(9Z-octadecenoyl)-glycerol + CoA. The catalysed reaction is 2-(9Z-octadecenoyl)-glycerol + dodecanoyl-CoA = 1-dodecanoyl-2-(9Z-octadecenoyl)-glycerol + CoA. The enzyme catalyses 2-(9Z-octadecenoyl)-glycerol + tetradecanoyl-CoA = 1-tetradecanoyl-2-(9Z-octadecenoyl)-glycerol + CoA. It carries out the reaction 2-(9Z-octadecenoyl)-glycerol + hexadecanoyl-CoA = 1-hexadecanoyl-2-(9Z-octadecenoyl)-glycerol + CoA. It catalyses the reaction 2-(9Z-octadecenoyl)-glycerol + octadecanoyl-CoA = 1-octadecanoyl-2-(9Z-octadecenoyl)-glycerol + CoA. The catalysed reaction is eicosanoyl-CoA + 2-(9Z-octadecenoyl)-glycerol = 1-eicosanoyl-2-(9Z-octadecenoyl)-glycerol + CoA. The enzyme catalyses 2-(9Z-octadecenoyl)-glycerol + (9Z)-octadecenoyl-CoA = 1,2-di-(9Z-octadecenoyl)-glycerol + CoA. It carries out the reaction 2-(9Z-octadecenoyl)-glycerol + (9Z,12Z)-octadecadienoyl-CoA = 1-(9Z,12Z-octadecadienoyl)-2-(9Z-octadecenoyl)-glycerol + CoA. It catalyses the reaction 2-(9Z-octadecenoyl)-glycerol + (5Z,8Z,11Z,14Z)-eicosatetraenoyl-CoA = 1-(5Z,8Z,11Z,14Z-eicosatetraenoyl)-2-(9Z-octadecenoyl)-glycerol + CoA. The catalysed reaction is a 2-acylglycerol + an acyl-CoA = a 1,2-diacyl-sn-glycerol + CoA. The enzyme catalyses a 2-acylglycerol + an acyl-CoA = a 2,3-diacyl-sn-glycerol + CoA. It carries out the reaction a 1-acylglycerol + an acyl-CoA = a 1,2-diacylglycerol + CoA. It catalyses the reaction 1-dodecanoylglycerol + (9Z)-octadecenoyl-CoA = 1-dodecanoyl-2-(9Z-octadecenoyl)-glycerol + CoA. The catalysed reaction is 1-tetradecanoylglycerol + (9Z)-octadecenoyl-CoA = 1-tetradecanoyl-2-(9Z-octadecenoyl)-glycerol + CoA. The enzyme catalyses 1-hexadecanoylglycerol + (9Z)-octadecenoyl-CoA = 1-hexadecanoyl-2-(9Z-octadecenoyl)-glycerol + CoA. It carries out the reaction 1-(9Z-octadecenoyl)-glycerol + (9Z)-octadecenoyl-CoA = 1,2-di-(9Z-octadecenoyl)-glycerol + CoA. It catalyses the reaction 1-(9Z,12Z-octadecadienoyl)-glycerol + (9Z)-octadecenoyl-CoA = 1-(9Z,12Z-octadecadienoyl)-2-(9Z-octadecenoyl)-glycerol + CoA. The catalysed reaction is 1-(9Z,12Z,15Z-octadecatrienoyl)-glycerol + (9Z)-octadecenoyl-CoA = 1-(9Z,12Z,15Z-octadecatrienoyl)-2-(9Z-octadecenoyl)-glycerol + CoA. The enzyme catalyses 1-(5Z,8Z,11Z,14Z-eicosatetraenoyl)-glycerol + (9Z)-octadecenoyl-CoA = 1-(5Z,8Z,11Z,14Z-eicosatetraenoyl)-2-(9Z-octadecenoyl)-glycerol + CoA. It carries out the reaction a 1-acylglycerol + an acyl-CoA = a 1,3-diacylglycerol + CoA. It catalyses the reaction 1-dodecanoylglycerol + (9Z)-octadecenoyl-CoA = 1-dodecanoyl-3-(9Z-octadecenoyl)-glycerol + CoA. The catalysed reaction is 1-hexadecanoylglycerol + (9Z)-octadecenoyl-CoA = 1-(9Z-octadecenoyl)-3-hexadecanoylglycerol + CoA. The enzyme catalyses 1-octadecanoylglycerol + (9Z)-octadecenoyl-CoA = 1-octadecanoyl-3-(9Z-octadecenoyl)-glycerol + CoA. It carries out the reaction 1-(9Z-octadecenoyl)-sn-glycerol + (9Z)-octadecenoyl-CoA = 1,3-di-(9Z-octadecenoyl)-glycerol + CoA. It catalyses the reaction 1-(9Z,12Z-octadecadienoyl)-glycerol + (9Z)-octadecenoyl-CoA = 1-(9Z-octadecenoyl)-3-(9Z,12Z-octadecadienoyl)-glycerol + CoA. The catalysed reaction is 1-(9Z,12Z,15Z-octadecatrienoyl)-glycerol + (9Z)-octadecenoyl-CoA = 1-(9Z,12Z,15Z-octadecatrienoyl)-3-(9Z-octadecenoyl)-glycerol + CoA. The enzyme catalyses a 1-acyl-sn-glycerol + an acyl-CoA = a 1,3-diacyl-sn-glycerol + CoA. It carries out the reaction a 3-acyl-sn-glycerol + an acyl-CoA = a 1,3-diacyl-sn-glycerol + CoA. It catalyses the reaction 3-octadecanoyl-sn-glycerol + (9Z)-octadecenoyl-CoA = 1-(9Z-octadecenoyl)-3-octadecanoyl-sn-glycerol + CoA. It participates in glycerolipid metabolism; triacylglycerol biosynthesis. Functionally, involved in glycerolipid synthesis and lipid metabolism. Catalyzes the formation of diacylglycerol, the precursor of triacylglycerol, by transferring the acyl chain of a fatty acyl-CoA to a monoacylglycerol, mainly at the sn-1 or sn-3 positions. It uses both sn-2-monoacylglycerol (2-acylglycerol) and sn-1-monoacylglycerol (1-acyl-sn-glycerol) equally well as substrates, and uses sn-3-monoacylglycerol (3-acyl-sn-glycerol) with lower efficiency. Probably not involved in absorption of dietary fat in the small intestine. This chain is 2-acylglycerol O-acyltransferase 1, found in Homo sapiens (Human).